A 156-amino-acid chain; its full sequence is 6,7-dimethyl-8-ribityllumazine synthase (156 aa).

5-amino-6-(D-ribitylamino)uracil-binding positions include Phe-22, 57-59 (AYE), and 81-83 (SVI). Residue 86 to 87 (GT) participates in (2S)-2-hydroxy-3-oxobutyl phosphate binding. The active-site Proton donor is the His-89. Phe-114 is a 5-amino-6-(D-ribitylamino)uracil binding site. Residue Arg-128 coordinates (2S)-2-hydroxy-3-oxobutyl phosphate.

This sequence belongs to the DMRL synthase family. In terms of assembly, forms an icosahedral capsid composed of 60 subunits, arranged as a dodecamer of pentamers.

The enzyme catalyses (2S)-2-hydroxy-3-oxobutyl phosphate + 5-amino-6-(D-ribitylamino)uracil = 6,7-dimethyl-8-(1-D-ribityl)lumazine + phosphate + 2 H2O + H(+). It participates in cofactor biosynthesis; riboflavin biosynthesis; riboflavin from 2-hydroxy-3-oxobutyl phosphate and 5-amino-6-(D-ribitylamino)uracil: step 1/2. Its function is as follows. Catalyzes the formation of 6,7-dimethyl-8-ribityllumazine by condensation of 5-amino-6-(D-ribitylamino)uracil with 3,4-dihydroxy-2-butanone 4-phosphate. This is the penultimate step in the biosynthesis of riboflavin. The polypeptide is 6,7-dimethyl-8-ribityllumazine synthase (Photobacterium profundum (strain SS9)).